Here is a 177-residue protein sequence, read N- to C-terminus: Large ribosomal subunit protein uL6 (177 aa).

It belongs to the universal ribosomal protein uL6 family. In terms of assembly, part of the 50S ribosomal subunit.

This protein binds to the 23S rRNA, and is important in its secondary structure. It is located near the subunit interface in the base of the L7/L12 stalk, and near the tRNA binding site of the peptidyltransferase center. In Hahella chejuensis (strain KCTC 2396), this protein is Large ribosomal subunit protein uL6.